A 561-amino-acid polypeptide reads, in one-letter code: uncharacterized protein (561 aa).

Residues 187–217 (DDEELSEEEILNRIDKLQIELEQVIGKQKNI) are a coiled coil.

This is an uncharacterized protein from Dictyostelium discoideum (Social amoeba).